A 513-amino-acid chain; its full sequence is ATP synthase subunit alpha (513 aa).

An ATP-binding site is contributed by 169–176 (GDRQTGKT).

The protein belongs to the ATPase alpha/beta chains family. In terms of assembly, F-type ATPases have 2 components, CF(1) - the catalytic core - and CF(0) - the membrane proton channel. CF(1) has five subunits: alpha(3), beta(3), gamma(1), delta(1), epsilon(1). CF(0) has three main subunits: a(1), b(2) and c(9-12). The alpha and beta chains form an alternating ring which encloses part of the gamma chain. CF(1) is attached to CF(0) by a central stalk formed by the gamma and epsilon chains, while a peripheral stalk is formed by the delta and b chains.

The protein resides in the cell membrane. The catalysed reaction is ATP + H2O + 4 H(+)(in) = ADP + phosphate + 5 H(+)(out). Its function is as follows. Produces ATP from ADP in the presence of a proton gradient across the membrane. The alpha chain is a regulatory subunit. This chain is ATP synthase subunit alpha, found in Polynucleobacter asymbioticus (strain DSM 18221 / CIP 109841 / QLW-P1DMWA-1) (Polynucleobacter necessarius subsp. asymbioticus).